Here is a 168-residue protein sequence, read N- to C-terminus: MTDSQQPGAATEQPKTEFALQKFYLKDVSLECPRSPQVFTGEWKPETNVQLNSQARPLDDQGLFEVELTLTVTTKSGGEVAYLVEVKQAGVFLARGFPKEQMGHLLAAYCPTTLFPFAREAVTDLVSKAGFPQMLLAPVNFDALYAQQLAQNHAGKAGEESAPAGASH.

Belongs to the SecB family. As to quaternary structure, homotetramer, a dimer of dimers. One homotetramer interacts with 1 SecA dimer.

It is found in the cytoplasm. One of the proteins required for the normal export of preproteins out of the cell cytoplasm. It is a molecular chaperone that binds to a subset of precursor proteins, maintaining them in a translocation-competent state. It also specifically binds to its receptor SecA. This Thioalkalivibrio sulfidiphilus (strain HL-EbGR7) protein is Protein-export protein SecB.